The following is a 127-amino-acid chain: uncharacterized protein (127 aa).

Positions 1–23 are cleaved as a signal peptide; the sequence is MSKPLKFLLWSSLALLLLQIGSG.

This is an uncharacterized protein from Arabidopsis thaliana (Mouse-ear cress).